The chain runs to 286 residues: N-alpha-acetyltransferase 80 (286 aa).

A disordered region spans residues T33–A54. The 148-residue stretch at L60 to T207 folds into the N-acetyltransferase domain. Substrate is bound by residues R85 and R90–S93. Residues V141–V143, G149–R154, and Q179 contribute to the acetyl-CoA site. The tract at residues F212–T269 is disordered. The span at P236–P248 shows a compositional bias: pro residues.

This sequence belongs to the acetyltransferase family. Strongly expressed in heart and skeletal muscle, followed by brain and pancreas, with weak expression in kidney, liver, and lung and no expression in placenta.

Its subcellular location is the cytoplasm. It localises to the cytosol. The catalysed reaction is N-terminal L-aspartyl-L-aspartyl-L-aspartyl-[protein] + acetyl-CoA = N-terminal N-acetyl-L-aspartyl-L-aspartyl-L-aspartyl-[protein] + CoA + H(+). The enzyme catalyses N-terminal L-glutamyl-L-glutamyl-L-glutamyl-[protein] + acetyl-CoA = N-terminal N-acetyl-L-glutamyl-L-glutamyl-L-glutamyl-[protein] + CoA + H(+). Its function is as follows. N-alpha-acetyltransferase that specifically mediates the acetylation of the acidic amino terminus of processed forms of beta- and gamma-actin (ACTB and ACTG, respectively). N-terminal acetylation of processed beta- and gamma-actin regulates actin filament depolymerization and elongation. In vivo, preferentially displays N-terminal acetyltransferase activity towards acid N-terminal sequences starting with Asp-Asp-Asp and Glu-Glu-Glu. In vitro, shows high activity towards Met-Asp-Glu-Leu and Met-Asp-Asp-Asp. May act as a tumor suppressor. This chain is N-alpha-acetyltransferase 80, found in Homo sapiens (Human).